The primary structure comprises 346 residues: NADH-ubiquinone oxidoreductase chain 2 (346 aa).

The next 11 membrane-spanning stretches (helical) occupy residues 3–23 (PLIF…VMMS), 25–45 (HWLM…PILM), 59–79 (YFLT…INLM), 96–116 (IIMT…FWVP), 122–142 (ISLT…MSIL), 149–169 (INLN…GWGG), 178–198 (IMAY…VYNP), 200–220 (LTML…MLFI), 242–262 (TLIL…GFMP), 274–294 (SSII…YFYM), and 322–342 (ITLL…TPML).

Belongs to the complex I subunit 2 family. In terms of assembly, core subunit of respiratory chain NADH dehydrogenase (Complex I) which is composed of 45 different subunits. Interacts with TMEM242.

It localises to the mitochondrion inner membrane. It carries out the reaction a ubiquinone + NADH + 5 H(+)(in) = a ubiquinol + NAD(+) + 4 H(+)(out). Core subunit of the mitochondrial membrane respiratory chain NADH dehydrogenase (Complex I) which catalyzes electron transfer from NADH through the respiratory chain, using ubiquinone as an electron acceptor. Essential for the catalytic activity and assembly of complex I. The sequence is that of NADH-ubiquinone oxidoreductase chain 2 from Equus caballus (Horse).